A 189-amino-acid chain; its full sequence is Small ribosomal subunit protein uS7 (189 aa).

This sequence belongs to the universal ribosomal protein uS7 family. In terms of assembly, component of the small ribosomal subunit.

The protein resides in the cytoplasm. This Encephalitozoon cuniculi (strain GB-M1) (Microsporidian parasite) protein is Small ribosomal subunit protein uS7 (RPS5).